We begin with the raw amino-acid sequence, 893 residues long: Alpha-actinin-1 (893 aa).

The actin-binding stretch occupies residues 1-248 (MDHHYDPQQT…IMTYVSSFYH (248 aa)). A Phosphotyrosine; by FAK1 modification is found at tyrosine 13. 2 consecutive Calponin-homology (CH) domains span residues 32–136 (KQQR…LRFA) and 145–251 (TSAK…HAFS). 4 Spectrin repeats span residues 275 to 385 (QLME…WLLN), 395 to 500 (HLAE…ALER), 510 to 621 (QLYL…ALME), and 631 to 734 (RLRK…EVEN). EF-hand domains follow at residues 747–782 (EQMNEFRASFNHFDRDHSGTLGPEEFKACLISLGYD) and 788–823 (QGEAEFARIMSIVDPNRMGVVTFQAFIDFMSRETAD). Residues aspartate 760, aspartate 762, serine 764, threonine 766, and glutamate 771 each contribute to the Ca(2+) site.

It belongs to the alpha-actinin family. Homodimer; antiparallel. Interacts with PDLIM4 (via PDZ domain).

The protein localises to the cytoplasm. Its subcellular location is the cytoskeleton. The protein resides in the myofibril. It localises to the sarcomere. It is found in the z line. The protein localises to the cell membrane. Its subcellular location is the cell junction. The protein resides in the cell projection. It localises to the ruffle. In terms of biological role, F-actin cross-linking protein is thought to anchor actin to a variety of intracellular structures. This is a bundling protein. The protein is Alpha-actinin-1 (ACTN1) of Gallus gallus (Chicken).